Here is a 387-residue protein sequence, read N- to C-terminus: Acetylajmalan esterase (387 aa).

The signal sequence occupies residues M1–G22. The Nucleophile role is filled by S36. Residues N98, N180, N199, N249, and N296 are each glycosylated (N-linked (GlcNAc...) asparagine). Residues D337 and H340 contribute to the active site.

It belongs to the 'GDSL' lipolytic enzyme family.

It catalyses the reaction 17-O-acetylajmaline + H2O = ajmaline + acetate + H(+). The enzyme catalyses 17-O-acetylnorajmaline + H2O = norajmaline + acetate + H(+). It functions in the pathway alkaloid biosynthesis; ajmaline biosynthesis. Functionally, acetylesterase involved in the biosynthesis of ajmaline-type monoterpenoid indole alkaloids (MIAs) natural products, important plant-derived pharmaceuticals used in the therapy of heart disorders. Deacetylates 17-O-acetylajmaline and 17-O-acetylnorajmaline to produce ajmaline and norajmaline, but is inactive toward other acetylated alkaloids. This Rauvolfia serpentina (Serpentine wood) protein is Acetylajmalan esterase.